The sequence spans 79 residues: Large ribosomal subunit protein uL24 (79 aa).

This sequence belongs to the universal ribosomal protein uL24 family. As to quaternary structure, part of the 50S ribosomal subunit.

Functionally, one of two assembly initiator proteins, it binds directly to the 5'-end of the 23S rRNA, where it nucleates assembly of the 50S subunit. In terms of biological role, one of the proteins that surrounds the polypeptide exit tunnel on the outside of the subunit. This Lactobacillus delbrueckii subsp. bulgaricus (strain ATCC 11842 / DSM 20081 / BCRC 10696 / JCM 1002 / NBRC 13953 / NCIMB 11778 / NCTC 12712 / WDCM 00102 / Lb 14) protein is Large ribosomal subunit protein uL24.